The following is a 388-amino-acid chain: Succinate--CoA ligase [ADP-forming] subunit beta (388 aa).

One can recognise an ATP-grasp domain in the interval 9 to 244; sequence KQLFARYGLP…QSQEDPREAQ (236 aa). Residues K46, 53–55, E99, T102, and E107 each bind ATP; that span reads GRG. The Mg(2+) site is built by N199 and D213. Substrate is bound by residues N264 and 321–323; that span reads GIV.

It belongs to the succinate/malate CoA ligase beta subunit family. Heterotetramer of two alpha and two beta subunits. Requires Mg(2+) as cofactor.

The enzyme catalyses succinate + ATP + CoA = succinyl-CoA + ADP + phosphate. It catalyses the reaction GTP + succinate + CoA = succinyl-CoA + GDP + phosphate. The protein operates within carbohydrate metabolism; tricarboxylic acid cycle; succinate from succinyl-CoA (ligase route): step 1/1. Functionally, succinyl-CoA synthetase functions in the citric acid cycle (TCA), coupling the hydrolysis of succinyl-CoA to the synthesis of either ATP or GTP and thus represents the only step of substrate-level phosphorylation in the TCA. The beta subunit provides nucleotide specificity of the enzyme and binds the substrate succinate, while the binding sites for coenzyme A and phosphate are found in the alpha subunit. In Salmonella dublin (strain CT_02021853), this protein is Succinate--CoA ligase [ADP-forming] subunit beta.